Reading from the N-terminus, the 101-residue chain is Small ribosomal subunit protein uS14 (101 aa).

Belongs to the universal ribosomal protein uS14 family. Part of the 30S ribosomal subunit. Contacts proteins S3 and S10.

In terms of biological role, binds 16S rRNA, required for the assembly of 30S particles and may also be responsible for determining the conformation of the 16S rRNA at the A site. This is Small ribosomal subunit protein uS14 from Pseudomonas aeruginosa (strain LESB58).